The primary structure comprises 849 residues: Autoinducer 1 sensor kinase/phosphatase LuxN (849 aa).

Transmembrane regions (helical) follow at residues 9–29 (IVYA…MWLF), 41–61 (VIFG…IAWI), 160–180 (SYFF…LVAM), 196–216 (IAGI…MTYF), 220–242 (FSLT…YALL), 251–275 (YIAY…AIFI), and 283–301 (WLIA…QLLY). The Histidine kinase domain maps to 468–683 (SIAHEMRNPL…EFHLYFPVVP (216 aa)). The residue at position 471 (H471) is a Phosphohistidine; by autocatalysis. The Response regulatory domain occupies 722–835 (TVLIVDDKEV…ALRHVLGNWL (114 aa)). D771 bears the 4-aspartylphosphate mark.

The protein resides in the cell inner membrane. The enzyme catalyses ATP + protein L-histidine = ADP + protein N-phospho-L-histidine.. Functionally, at low cell density, in the absence of AI-1 (autoinducer 1), LuxN has a kinase activity and autophosphorylates on His-471. The phosphoryl group is then transferred on Asp-771 of the response regulator domain. The phosphoryl group is transferred to LuxU, and ultimately to LuxO. At high cell density, in the presence of AI-1, the kinase activity is inactivated, and the response regulator domain has a phosphatase activity. LuxN phosphatase acts on itself. As LuxU could function to establish an equilibrium between the aspartyl-phosphate of LuxN and the aspartyl-phosphate of LuxO, LuxU transfers phosphate from LuxO to LuxN and finally phosphate is drained from the system. The chain is Autoinducer 1 sensor kinase/phosphatase LuxN (luxN) from Vibrio harveyi (Beneckea harveyi).